We begin with the raw amino-acid sequence, 168 residues long: Ribosome maturation factor RimM (168 aa).

Residues 93 to 168 (EDEFYQSDLV…IVLNIPEFID (76 aa)) form the PRC barrel domain.

Belongs to the RimM family. In terms of assembly, binds ribosomal protein uS19.

The protein resides in the cytoplasm. Its function is as follows. An accessory protein needed during the final step in the assembly of 30S ribosomal subunit, possibly for assembly of the head region. Essential for efficient processing of 16S rRNA. May be needed both before and after RbfA during the maturation of 16S rRNA. It has affinity for free ribosomal 30S subunits but not for 70S ribosomes. The protein is Ribosome maturation factor RimM of Wolbachia pipientis wMel.